Consider the following 585-residue polypeptide: Bifunctional lycopene cyclase/phytoene synthase (585 aa).

Residues M1–N243 form a lycopene beta-cyclase region. Helical transmembrane passes span F3–L23, K35–I55, I75–L97, L123–H141, L151–I171, G173–V193, and I221–F241. The tract at residues T250 to A585 is phytoene synthase.

In the N-terminal section; belongs to the lycopene beta-cyclase family. It in the C-terminal section; belongs to the phytoene/squalene synthase family.

It localises to the membrane. It catalyses the reaction all-trans-lycopene = gamma-carotene. It carries out the reaction gamma-carotene = all-trans-beta-carotene. The enzyme catalyses 2 (2E,6E,10E)-geranylgeranyl diphosphate = 15-cis-phytoene + 2 diphosphate. The protein operates within carotenoid biosynthesis; beta-carotene biosynthesis. It participates in carotenoid biosynthesis; phytoene biosynthesis; all-trans-phytoene from geranylgeranyl diphosphate: step 1/1. Functionally, bifunctional enzyme that catalyzes the reactions from geranylgeranyl diphosphate to phytoene (phytoene synthase) and lycopene to beta-carotene via the intermediate gamma-carotene (lycopene cyclase). The chain is Bifunctional lycopene cyclase/phytoene synthase from Phaeosphaeria nodorum (strain SN15 / ATCC MYA-4574 / FGSC 10173) (Glume blotch fungus).